We begin with the raw amino-acid sequence, 495 residues long: Glycerol kinase (495 aa).

Thr-13 is a binding site for ADP. Residues Thr-13, Thr-14, and Ser-15 each contribute to the ATP site. Thr-13 is a sn-glycerol 3-phosphate binding site. Arg-17 contacts ADP. Positions 83, 84, 135, and 244 each coordinate sn-glycerol 3-phosphate. 5 residues coordinate glycerol: Arg-83, Glu-84, Tyr-135, Asp-244, and Gln-245. ADP contacts are provided by Thr-266 and Gly-309. ATP contacts are provided by Thr-266, Gly-309, Gln-313, and Gly-410. Positions 410 and 414 each coordinate ADP.

This sequence belongs to the FGGY kinase family.

The catalysed reaction is glycerol + ATP = sn-glycerol 3-phosphate + ADP + H(+). The protein operates within polyol metabolism; glycerol degradation via glycerol kinase pathway; sn-glycerol 3-phosphate from glycerol: step 1/1. With respect to regulation, inhibited by fructose 1,6-bisphosphate (FBP). Its function is as follows. Key enzyme in the regulation of glycerol uptake and metabolism. Catalyzes the phosphorylation of glycerol to yield sn-glycerol 3-phosphate. This chain is Glycerol kinase, found in Shewanella sediminis (strain HAW-EB3).